The following is a 354-amino-acid chain: Methylthioribose-1-phosphate isomerase (354 aa).

Residues 58-60 (RGA), Arg-101, and Gln-204 contribute to the substrate site. Catalysis depends on Asp-245, which acts as the Proton donor. Residue 255 to 256 (NK) coordinates substrate.

Belongs to the eIF-2B alpha/beta/delta subunits family. MtnA subfamily.

The catalysed reaction is 5-(methylsulfanyl)-alpha-D-ribose 1-phosphate = 5-(methylsulfanyl)-D-ribulose 1-phosphate. It functions in the pathway amino-acid biosynthesis; L-methionine biosynthesis via salvage pathway; L-methionine from S-methyl-5-thio-alpha-D-ribose 1-phosphate: step 1/6. Catalyzes the interconversion of methylthioribose-1-phosphate (MTR-1-P) into methylthioribulose-1-phosphate (MTRu-1-P). The polypeptide is Methylthioribose-1-phosphate isomerase (Xanthomonas axonopodis pv. citri (strain 306)).